The primary structure comprises 403 residues: Double C2-like domain-containing protein alpha (403 aa).

An interaction with UNC13D and DYNLT1 region spans residues 1–92 (MRGRRGDRMT…DSYDSDDTTA (92 aa)). C2 domains follow at residues 92–214 (ALGT…HFNI) and 254–387 (ERGR…ERWH). The Ca(2+) site is built by aspartate 123, aspartate 129, aspartate 184, aspartate 186, aspartate 285, aspartate 291, aspartate 345, aspartate 347, and aspartate 353. The interval 218 to 403 (RQVPLPSPSS…PPAAGALPLA (186 aa)) is interaction with UNC13D.

In terms of assembly, interacts (via N-terminus) with UNC13A. Interacts with cytoplasmic dynein light chain DYNLT1. Interacts with UNC13D. The cofactor is Ca(2+). Predominantly expressed in brain. Also found in non-neural tissues. Expressed in RBL-2H3 mast cell line.

The protein resides in the cytoplasmic vesicle. It localises to the secretory vesicle. It is found in the synaptic vesicle membrane. The protein localises to the synapse. Its subcellular location is the synaptosome. The protein resides in the lysosome. Its function is as follows. Calcium sensor which most probably regulates fusion of vesicles with membranes. Binds calcium and phospholipids. May be involved in calcium dependent neurotransmitter release through the interaction with UNC13A. May be involved in calcium-dependent spontaneous release of neurotransmitter in absence of action potentials in neuronal cells. Regulates Ca(2+)-dependent secretory lysosome exocytosis in mast cells. This Rattus norvegicus (Rat) protein is Double C2-like domain-containing protein alpha (Doc2a).